A 189-amino-acid chain; its full sequence is Thermostable direct hemolysin (189 aa).

A signal peptide spans 1-24; sequence MKYQYFAKKSFLFISMLAAFKTFA. C175 and C185 are oxidised to a cystine.

This sequence belongs to the TDH hemolysin family. In terms of assembly, homodimer.

Functionally, bacterial hemolysins are exotoxins that attack blood cell membranes and cause cell rupture by mechanisms not clearly defined. The sequence is that of Thermostable direct hemolysin (tdh) from Vibrio mimicus.